Here is a 328-residue protein sequence, read N- to C-terminus: Probable G-protein coupled receptor 82 (328 aa).

At 1 to 11 the chain is on the extracellular side; that stretch reads MTNNSTCIQPS. Residues Asn-3 and Asn-4 are each glycosylated (N-linked (GlcNAc...) asparagine). A helical membrane pass occupies residues 12–32; the sequence is VISTTALPVTYIFLFIIGLFG. At 33–55 the chain is on the cytoplasmic side; that stretch reads NSLAQWVFLTKIGKKTSTHIYLA. Residues 56–76 form a helical membrane-spanning segment; it reads NLVTANLLVCTAMPFMGIYFL. At 77 to 92 the chain is on the extracellular side; that stretch reads RGFYWKYQSVQCRLVN. A helical membrane pass occupies residues 93–115; sequence FLGTLSMHVSMFVSLLILSWIAI. The Cytoplasmic segment spans residues 116–156; sequence SRYATLMKKESKQEATSCYERMFYGHVLKRFRQPNFARTMC. A helical transmembrane segment spans residues 157-177; the sequence is IYIWGVVLVIIIPVTLYYSVV. Residues 178 to 197 are Extracellular-facing; that stretch reads EATEEGQSQCYNRQMELGAR. A helical transmembrane segment spans residues 198–218; sequence PSQIAGLIGTTFIGFSFLVVV. Over 219–251 the chain is Cytoplasmic; that stretch reads TSYYSLVSHLRRVRTCTSITEKDLTYRSVKRHL. A helical membrane pass occupies residues 252-272; the sequence is LIIQVLLVVCFLPYSIFKPIF. Residues 273–328 lie on the Extracellular side of the membrane; it reads YVLHQREGDCQQLNYLIEAKNILTCLASARSSTDPIIFLLLDKTFKKTLYGLLTKS.

Belongs to the G-protein coupled receptor 1 family.

The protein localises to the cell membrane. Orphan receptor. The protein is Probable G-protein coupled receptor 82 (Gpr82) of Mus musculus (Mouse).